The sequence spans 349 residues: Twinfilin-2-B (349 aa).

ADF-H domains are found at residues 4–139 and 177–313; these read QTGI…KHVS and GLSF…DEVH. Residues 321–349 form a disordered region; sequence QAFAKPKGPAGKRGQKRLIKGPGENGEDS.

Belongs to the actin-binding proteins ADF family. Twinfilin subfamily. As to quaternary structure, interacts with G-actin; ADP-actin form and capping protein (CP).

The protein resides in the cytoplasm. Its subcellular location is the cytoskeleton. It is found in the perinuclear region. In terms of biological role, actin-binding protein involved in motile and morphological processes. Inhibits actin polymerization, likely by sequestering G-actin. The sequence is that of Twinfilin-2-B (twf2-b) from Xenopus laevis (African clawed frog).